We begin with the raw amino-acid sequence, 306 residues long: Ribosomal protein L11 methyltransferase (306 aa).

Positions 154, 179, 201, and 242 each coordinate S-adenosyl-L-methionine.

It belongs to the methyltransferase superfamily. PrmA family.

Its subcellular location is the cytoplasm. It catalyses the reaction L-lysyl-[protein] + 3 S-adenosyl-L-methionine = N(6),N(6),N(6)-trimethyl-L-lysyl-[protein] + 3 S-adenosyl-L-homocysteine + 3 H(+). In terms of biological role, methylates ribosomal protein L11. In Xanthomonas campestris pv. campestris (strain 8004), this protein is Ribosomal protein L11 methyltransferase.